Here is a 285-residue protein sequence, read N- to C-terminus: UPF0354 protein SACOL1793 (285 aa).

The protein belongs to the UPF0354 family.

The chain is UPF0354 protein SACOL1793 from Staphylococcus aureus (strain COL).